The following is a 253-amino-acid chain: UDP-Glc:alpha-D-GlcNAc-diphosphoundecaprenol beta-1,3-glucosyltransferase WfgD (253 aa).

Belongs to the glycosyltransferase 2 family. Mn(2+) serves as cofactor. Requires Mg(2+) as cofactor.

It localises to the cell inner membrane. It carries out the reaction N-acetyl-alpha-D-glucosaminyl-di-trans,octa-cis-undecaprenyl diphosphate + UDP-alpha-D-glucose = beta-D-Glc-(1-&gt;3)-alpha-D-GlcNAc-di-trans,octa-cis-undecaprenyl diphosphate + UDP + H(+). It functions in the pathway bacterial outer membrane biogenesis; lipopolysaccharide biosynthesis. Its function is as follows. Catalyzes the addition of Glc, the second sugar moiety of the O152-antigen repeating unit, to GlcNAc-pyrophosphate-undecaprenol. This is UDP-Glc:alpha-D-GlcNAc-diphosphoundecaprenol beta-1,3-glucosyltransferase WfgD (wfgD) from Escherichia coli.